A 55-amino-acid chain; its full sequence is Large ribosomal subunit protein bL32c (55 aa).

This sequence belongs to the bacterial ribosomal protein bL32 family.

The protein resides in the plastid. Its subcellular location is the chloroplast. This Daucus carota (Wild carrot) protein is Large ribosomal subunit protein bL32c.